Consider the following 603-residue polypeptide: Beta-hexosaminidase (603 aa).

A signal peptide spans 1 to 19 (MAYFRLYAVLLAVASSVAA). Residues Asp-225, His-278, and Glu-349 each act as charge relay system in the active site. Residues Cys-293 and Cys-354 are joined by a disulfide bond. Asn-356 carries an N-linked (GlcNAc...) asparagine glycan. A disulfide bridge links Cys-451 with Cys-486. N-linked (GlcNAc...) asparagine glycans are attached at residues Asn-503 and Asn-528. Cys-586 and Cys-593 form a disulfide bridge.

Belongs to the glycosyl hydrolase 20 family. As to quaternary structure, homodimer.

The protein localises to the secreted. The catalysed reaction is Hydrolysis of terminal non-reducing N-acetyl-D-hexosamine residues in N-acetyl-beta-D-hexosaminides.. Its function is as follows. Part of the binary chitinolytic system. Involved in hydrolysis of chitobiose and higher chito-oligomers (produced from cell wall chitin by endochitinases), thus contributing to the formation of germ tubes, fruit-bodies and septa during hyphenation. Hydrolyzes synthetic substrates p-nitrophenyl-beta-N-acetyl-glucosamine (pNP-beta-GlcNAc), p-nitrophenyl-beta-N-acetyl-galactosamine (pNP-beta-GalNAc) and 5-bromo-4-chloro-3-indoyl-beta-D-N-glucosaminide (X-GlcNAc). The chain is Beta-hexosaminidase from Emericella nidulans (Aspergillus nidulans).